We begin with the raw amino-acid sequence, 2109 residues long: MEVHDFETDEFNDFNEDDYATREFLNPDERMTYLNHADYNLNSPLISDDIDNLIRKFNSLPIPSMWDSKNWDGVLEMLTSCQANPISTSQMHKWMGSWLMSDNHDASQGYSFLHEVDKEAEITFDVVETFIRGWGNKPIEYIKKERWTDSFKILAYLCQKFLDLHKLTLILNAVSEVELLNLARTFKGKVRRSSHGTNICRIRVPSLGPTFISEGWAYFKKLDILMDPNFLLMVKDVIIGRMQTVLSMVCRIDNLFSEQDIFSLLNIYRIGDKIVERQGNFSYDLIKMVEPICNLKLMKLARESRPLVPQFPHFENHIKTSVDEGAKIDRGIRFLHDQIMSVKTVDLTLVIYGSFRHWGHPFIDYYTGLEKLHSQVTMKKDIDVSYAKALASDLARIVLFQQFNDHKKWFVNGDLLPHDHPFKSHVKENTWPTAAQVQDFGDKWHELPLIKCFEIPDLLDPSIIYSHKSHSMNRSEVLKHVRMNPNTPIPSKKVLQTMLDTKATNWKEFLKEIDEKGLDDDDLIIGLKGKERELKLAGRFFSLMSWKFPEYFVITEYLIKTHFVPMFKGLTMADDLTAVIKKMLDSSSGQGLKSYEAICIANHIDYEKWNNHQRKLSNGPVFRVMGQFLGYPSLIERTHEFFEKSLIYYNGRPDLMRVHNNTLINSTSQPVCWQGQEGGLEGLRQKGWTILNLLVIQREAKIRNTAVKVLAQGDNQVICTQYKTKKSRNVVELQGALNQMVSNNEKIMTAIKIGTGKLGLLINDDETMQSADYLNYGKIPIFRGVIRGLETKRWSRVTCVTNDQIPTCANIMSSVSTNALTVAHFAENPINAMIQYNYFGTFARLLLMMHDPALRQSLYEVQDKIPGLHSSTFKYAMLYLDPSIGGVSGMSLSRFLIRAFPDPVTESLSSWRFIHVHARSEHLKEMSAVFGNPEIAKFRITHIDKLVEDPTSLNIAMGMSPANLLKTEVKKCLIESRQTIRNQVIKDATIYLYHEEDRLRSFLWSINPLFPRFLSEFKSGTFLGVPDGLISLFQNSRTIRNSFKKKYHRELDDLIVRSEVSSLTHLGKLHLRRGSCKMWTCSATHADTLRYKSWGRTVIGTTVPHPLEMLGPQHRKETPCAPCNTSGFNYVSVHCPDGIHDVFSSRGPLPAYLGSKTSESTSILQPWERESKVPLIKRATRLRDAISWFVEPDSKLAMTILSNIHSLTGEEWTKRQHGFKRTGSALHRFSTSRMSHGGFASQSTAALTRLMATTDTMRDLGDQNFDFLFQATLLYAQITTTVARDGWITSCTDHYHIACKSCLRPIEEITLDSSMDYTPPDVSHVLKTWRNGEGSWGQEIKQIYPLEANWKNLAPAEQSYQVGRCIGFLYGDLAYRKSTHAEDSSLFPLSIQGRIRGRGFLKGLLDGLMRASCCQVIHRRSLAHLKRPANAVYGGLIYLIDKLSVSPPFLSLTRSGPIRDELETIPHKIPTSYPTSNRDMGVIVRNYFKYQCRLIEKGKYRSHYSQLWLFSDVLSIDFIGPFSISTTLLQILYKPFLSGKDKNELRELANLSSLLRSGEGWEDIHVKFFTKDILLCPEEIRHACKFGIPKDNNKDMSYPPWGRESRGTITTIPVYYTTTPYPKMLEMPPRIQNPLLSGIRLGQLPTGAHYKIRSILHGMGIHYRDFLSCGDGSGGMTAALLRENVHSRGIFNSLLELSGSVMRGASPEPPSALETLGGDKSRCVNGETCWEYPSDLCDPRTWDYFLRLKAGLGLQIDLIVMDMEVRDSSTSLKIETNVRNYVHRILDEQGVLIYKTYGTYICESEKNAVTILGPMFKTVDLVQTEFSSSQTSEVYMVCKGLKKLIDEPNPDWSSINESWKNLYAFQSSEQEFARAKKVSTYFTLTGIPSQFIPDPFVNIETMLQIFGVPTGVSHAAALKSSDRPADLLTISLFYMAIISYYNINHIRVGPIPPNPPSDGIAQNVGIAITGISFWLSLMEKDIPLYQQCLAVIQQSFPIRWEAVSVKGGYKQKWSTRGDGLPKDTRISDSLAPIGNWIRSLELVRNQVRLNPFNEILFNQLCRTVDNHLKWSNLRRNTGMIEWINRRISKEDRSILMLKSDLHEENSWRD.

The RdRp catalytic domain maps to 598-784 (ICIANHIDYE…NYGKIPIFRG (187 aa)). Residues D605 and D714 each contribute to the Mg(2+) site. Residues 866–1334 (PGLHSSTFKY…VLKTWRNGEG (469 aa)) are capping domain. Residues C1081, E1108, C1120, and C1123 each coordinate Zn(2+). Residues 1081–1331 (CSATHADTLR…VSHVLKTWRN (251 aa)) form a PRNTase domain region. A priming-capping loop region spans residues 1152-1189 (YLGSKTSESTSILQPWERESKVPLIKRATRLRDAISWF). The active-site Nucleophile; for GDP polyribonucleotidyltransferase is H1227. 4 residues coordinate Zn(2+): H1294, H1296, C1299, and C1302. Positions 1358 to 1557 (QSYQVGRCIG…LANLSSLLRS (200 aa)) are connector domain. A Mononegavirus-type SAM-dependent 2'-O-MTase domain is found at 1640–1837 (RLGQLPTGAH…SSQTSEVYMV (198 aa)). The active-site For mRNA (nucleoside-2'-O-)-methyltransferase 2 is the K1651. Residue 1667–1676 (LSCGDGSGGM) coordinates ATP. Active-site for mRNA (nucleoside-2'-O-)-methyltransferase residues include D1762, K1795, and E1833.

It belongs to the rhabdoviridae protein L family. In terms of assembly, may form homodimer. Interacts with the P protein; the association of P and L forms the polymerase complex, positions it on the template and allows to package the L polymerase in the virion, since P acts as a bridge between N and L. L binds loosely to N and is further bridged by the P protein, which interacts with L and N oligomers simultaneously.

Its subcellular location is the virion. The protein localises to the host cytoplasm. It carries out the reaction RNA(n) + a ribonucleoside 5'-triphosphate = RNA(n+1) + diphosphate. It catalyses the reaction GTP + H2O = GDP + phosphate + H(+). The enzyme catalyses a 5'-end triphospho-adenylyl-adenylyl-cytidylyl-adenosine in mRNA + GDP + H(+) = a 5'-end (5'-triphosphoguanosine)-adenylyl-adenylyl-cytidylyl-adenosine in mRNA + diphosphate. The catalysed reaction is a 5'-end (5'-triphosphoguanosine)-adenylyl-adenylyl-cytidylyl-adenosine in mRNA + 2 S-adenosyl-L-methionine = a 5'-end (N(7)-methyl 5'-triphosphoguanosine)-(2'-O-methyladenylyl)-adenylyl-cytidylyl-adenosine in mRNA + 2 S-adenosyl-L-homocysteine + H(+). It carries out the reaction a 5'-end (5'-triphosphoguanosine)-adenylyl-adenylyl-cytidylyl-adenosine in mRNA + S-adenosyl-L-methionine = a 5'-end (5'-triphosphoguanosine)-(2'-O-methyladenylyl)-adenylyl-cytidylyl-adenosine in mRNA + S-adenosyl-L-homocysteine + H(+). It catalyses the reaction a 5'-end (5'-triphosphoguanosine)-(2'-O-methyladenylyl)-adenylyl-cytidylyl-adenosine in mRNA + S-adenosyl-L-methionine = a 5'-end (N(7)-methyl 5'-triphosphoguanosine)-(2'-O-methyladenylyl)-adenylyl-cytidylyl-adenosine in mRNA + S-adenosyl-L-homocysteine. With respect to regulation, the GDP polyribonucleotidyltransferase activity is inhibited by the GDP analog DAPDP. Functionally, multifunctional enzyme responsible for RNA synthesis (replicase and transcriptase), cap addition, and cap methylation. Also performs the polyadenylation of subgenomic mRNAs by a stuttering mechanism at a slipery stop site present at the end of viral genes. The template is composed of the viral RNA tightly encapsidated by the nucleoprotein (N). L is packaged into virions during assembly and translocates to the 3' leader promoter to initiate transcription after entering the host cells. During transcription and replication of the genome, L does not bind the N-RNA complex directly, but is bridged by its non-catalytic cofactor P, which interacts with L and N oligomers simultaneously. In the transcription mode, the polymerase performs the sequential transcription of all mRNAs using a termination-reinitiation mechanism responding to gene start and gene end signals. Some polymerase disengage from the template at each gene junction, resulting in a decreasing abundance of transcripts from the 3' to the 5' end of the genome. The first gene is the most transcribed, and the last the least transcribed. The viral phosphoprotein helps the polymerase to engage the N-RNA template and acts as a processivity factor. Polyribonucleotidyl transferase (PRNTase) adds the cap structure when the nascent RNA chain length has reached few nucleotides. Ribose 2'-O methylation of viral mRNA cap precedes and facilitates subsequent guanine-N-7 methylation, both activities being carried by the viral polymerase. In the replication mode, the polymerase replicates the whole viral genome without recognizing the gene end transcriptional signals. The ability of the polymerase to override the gene end signals as it is producing the antigenome is probably due to replicative RNA becoming encapsidated with nucleoprotein as it is synthesized. The sequence is that of RNA-directed RNA polymerase L (L) from Vesicular stomatitis Indiana virus (strain San Juan) (VSIV).